Here is a 1482-residue protein sequence, read N- to C-terminus: Calcium-dependent protein kinase 6 (1482 aa).

Disordered stretches follow at residues 250-320 and 739-760; these read TNNY…IRPN and SENF…DDSN. Positions 254-264 are enriched in polar residues; sequence AHDNNQDSNSY. Residues 277–301 are compositionally biased toward acidic residues; it reads EEDNDTGDTYADNEEDEDNRDDNDD. Positions 302 to 318 are enriched in polar residues; the sequence is YSQYNQCEVESDTNQIR. Positions 739 to 748 are enriched in low complexity; sequence SENFSNNFND. Residues 749 to 760 show a composition bias toward basic and acidic residues; that stretch reads NKQKSLKNDDSN. 2 consecutive EF-hand domains span residues 931-966 and 972-1007; these read IFER…LCYN and VDKK…LLKQ. Residues Asp-985, Ser-987, Asn-989, Cys-991, and Asp-996 each coordinate Ca(2+). Positions 1043–1295 constitute a Protein kinase domain; it reads LSFKKILGCG…AAVLLHHPWF (253 aa). ATP-binding positions include 1049–1057 and Lys-1072; that span reads LGCGAFGEV. Asp-1162 serves as the catalytic Proton acceptor. EF-hand domains follow at residues 1338–1373, 1376–1406, 1407–1442, and 1468–1482; these read NHVK…AGVK, DINR…RWKN, IDST…NGVN, and KISF…LSTF. Positions 1351, 1353, 1355, 1357, and 1362 each coordinate Ca(2+). Asp-1420, Asp-1422, Asp-1424, Tyr-1426, and Asp-1431 together coordinate Ca(2+).

It belongs to the protein kinase superfamily. Ser/Thr protein kinase family. CDPK subfamily. The cofactor is Mg(2+).

It carries out the reaction L-seryl-[protein] + ATP = O-phospho-L-seryl-[protein] + ADP + H(+). The catalysed reaction is L-threonyl-[protein] + ATP = O-phospho-L-threonyl-[protein] + ADP + H(+). With respect to regulation, activated by calcium. In terms of biological role, calcium-dependent protein kinase which acts as a sensor and effector of intracellular Ca(2+) levels. In sporozoites, probably involved in the secretion of the cysteine protease that cleaves circumsporozoite protein CSP, thereby exposing CSP TSR domain, which binds with high affinity to highly sulfated heparan sulfate proteoglycans (HSPGs), resulting in productive invasion of the host hepatocytes. The protein is Calcium-dependent protein kinase 6 of Plasmodium berghei (strain Anka).